A 959-amino-acid chain; its full sequence is MTDPKSYKDTVNLPKTNFSMRANAVKREPELQKFWADNQIYEKLSQENPEEVFVLHDGPPYANGSLHMGHALNKTLKDIINKYKLLRGYKVRYVPGWDCHGLPIELKVLQSMKSKEREGLTPLKLRHKARDFALKTQEEQAKGFKRFGVWGDWENPYLTLTPEYEAAQIGVFGEMALKGYIYRGLKPVHWSPSSQTALAEAELEYPEGHTSRSIFAAFPIIKASKDTEEILQPFLNKLGVAIWTTTPWTLPGNLAVALNPDLNYAVVEQNSDVCNYQYLIVAADLVERLSTTFETELTVKATLPGKALEHTIYRHPLYDRESEILIGGDYVTTESGTGLVHTAPGHGQEDYMVGQRYGLGILSPVDAKGNFTEEARQFAGLNVLKDANEVIINELKEKGSLLKEEAYQHKYPYDWRTKKPTIFRATEQWFASVKGFRDAALTAIKTVQWIPAQGENRITPMVSDRSDWCISRQRSWGLPIPVFYDEETNEPLLTEETIKHIQTIFAEKGSDAWWEMSIEALLPDQYKADAHKYRKGTDTMDVWFDSGSSWASVAKQRPELKYPADIYLEGSDQHRGWFQSSLLTSVAVNEIAPYKTVLTHGFVLDEKGHKMSKSLGNIVDPNVIINGGKNQKQEPPYGADVLRLWVSSVDYSSDVPIGKTILKQLSDIYRKIRNTARFLLGNLHDFDPKKDTVSYEELPELDRYMLHRITEVFTEVTDAFETYQFFRFFQTVQNFCVVDLSNFYLDIAKDRLYISHPESIRRRSCQTVLAIAIENLAKAIAPVLCHMAEDIWQFLPYETPYKSVFTAGWVKTSKQWENSELSASWAKIRGIRNEVNNALELARKEKAIGSSLDAKVLLYVPEQNLRQQLEKFNPADSLTGNHVDELRYFVLASQVELVDSLDSIKNADYHSESDLVSVGVIKAEGEKCDRCWNYSTKVGEFKDDPTICERCNAALVGDF.

Positions 60-70 match the 'HIGH' region motif; the sequence is PYANGSLHMGH. L-isoleucyl-5'-AMP is bound at residue Glu569. The 'KMSKS' region motif lies at 610–614; that stretch reads KMSKS. Lys613 lines the ATP pocket. Zn(2+) is bound by residues Cys928, Cys931, Cys948, and Cys951.

Belongs to the class-I aminoacyl-tRNA synthetase family. IleS type 1 subfamily. Monomer. Zn(2+) is required as a cofactor.

It is found in the cytoplasm. The catalysed reaction is tRNA(Ile) + L-isoleucine + ATP = L-isoleucyl-tRNA(Ile) + AMP + diphosphate. Its function is as follows. Catalyzes the attachment of isoleucine to tRNA(Ile). As IleRS can inadvertently accommodate and process structurally similar amino acids such as valine, to avoid such errors it has two additional distinct tRNA(Ile)-dependent editing activities. One activity is designated as 'pretransfer' editing and involves the hydrolysis of activated Val-AMP. The other activity is designated 'posttransfer' editing and involves deacylation of mischarged Val-tRNA(Ile). The polypeptide is Isoleucine--tRNA ligase (Crocosphaera subtropica (strain ATCC 51142 / BH68) (Cyanothece sp. (strain ATCC 51142))).